Here is a 337-residue protein sequence, read N- to C-terminus: Putative olfactory receptor 1F12P (337 aa).

Over 1–25 (MEGKNQTNISEFLLLGFSSWQQQQV) the chain is Extracellular. Residues N5 and N8 are each glycosylated (N-linked (GlcNAc...) asparagine). The chain crosses the membrane as a helical span at residues 26-49 (LLFALFLCLYLTGLFGNLLILLAI). The Cytoplasmic portion of the chain corresponds to 50–57 (GSDHCLHT). The helical transmembrane segment at 58–79 (PMYFFLANLSLVDLCLPSATVP) threads the bilayer. The Extracellular segment spans residues 80-100 (KMLLNIQTQTQTISYPGCLAQ). C97 and C189 are oxidised to a cystine. Residues 101–120 (MYFCMMFANMDNFLLTVMAY) traverse the membrane as a helical segment. At 121-139 (DRYVAICHPLHYSTIMALR) the chain is on the cytoplasmic side. The helical transmembrane segment at 140 to 158 (LCASLVAAPWVIAILNPLL) threads the bilayer. The Extracellular segment spans residues 159–196 (HTLMMAHLHFCSDNVIHHFFCDINSLLPLSCSDTSLNQ). Residues 197 to 219 (LSVLATVGLIFVVPSVCILVSYI) form a helical membrane-spanning segment. At 220-236 (LIVSAVMKVPSAQGKLK) the chain is on the cytoplasmic side. The helical transmembrane segment at 237–259 (AFSTCGSHLALVILFYGAITGVY) threads the bilayer. At 260-272 (MSPLSNHSTEKDS) the chain is on the extracellular side. Residue N265 is glycosylated (N-linked (GlcNAc...) asparagine). A helical membrane pass occupies residues 273-292 (AASVIFMVVAPVLNPFIYSL). Residues 293–337 (RNNELKGTLKKTLSRPGAVAHACNPSTLGGRGGWIMRSGDRDHPG) lie on the Cytoplasmic side of the membrane.

This sequence belongs to the G-protein coupled receptor 1 family.

It localises to the cell membrane. In terms of biological role, odorant receptor. This chain is Putative olfactory receptor 1F12P, found in Homo sapiens (Human).